The primary structure comprises 367 residues: Glutamate 5-kinase (367 aa).

Lys10 lines the ATP pocket. Residues Ser50, Asp137, and Asn149 each coordinate substrate. ATP-binding positions include Thr169–Asp170 and Thr211–Lys217. The 79-residue stretch at Ala275–Glu353 folds into the PUA domain.

Belongs to the glutamate 5-kinase family.

Its subcellular location is the cytoplasm. The catalysed reaction is L-glutamate + ATP = L-glutamyl 5-phosphate + ADP. It participates in amino-acid biosynthesis; L-proline biosynthesis; L-glutamate 5-semialdehyde from L-glutamate: step 1/2. In terms of biological role, catalyzes the transfer of a phosphate group to glutamate to form L-glutamate 5-phosphate. In Salmonella arizonae (strain ATCC BAA-731 / CDC346-86 / RSK2980), this protein is Glutamate 5-kinase.